Reading from the N-terminus, the 261-residue chain is Indole-3-glycerol phosphate synthase (261 aa).

It belongs to the TrpC family.

The catalysed reaction is 1-(2-carboxyphenylamino)-1-deoxy-D-ribulose 5-phosphate + H(+) = (1S,2R)-1-C-(indol-3-yl)glycerol 3-phosphate + CO2 + H2O. Its pathway is amino-acid biosynthesis; L-tryptophan biosynthesis; L-tryptophan from chorismate: step 4/5. This is Indole-3-glycerol phosphate synthase from Paraburkholderia xenovorans (strain LB400).